Reading from the N-terminus, the 446-residue chain is Cytochrome P450 monooxygenase ATR14 (446 aa).

The disordered stretch occupies residues 403–446 (NFTYPDEFRPDRWLDDRDQKEYEHDHGDAMQPFSVGPRDCPSQK). Over residues 408–430 (DEFRPDRWLDDRDQKEYEHDHGD) the composition is skewed to basic and acidic residues. C442 is a binding site for heme.

The protein belongs to the cytochrome P450 family. Requires heme as cofactor.

Its pathway is mycotoxin biosynthesis. Its function is as follows. Cytochrome P450 monooxygenase; part of the core atranone cluster (CAC) which products are predicted to catalyze most or all steps of mycotoxin atranone synthesis, starting from geranylgeranyl pyrophosphate (GGPP). The initial cyclization of GGPP to dolabellane is probably performed by the terpene cyclase ATR13. The Baeyer-Villiger oxidation near the end of the atranone synthesis, which converts atranones D and E to atranones F and G is predicted to be catalyzed by the monooxygenase ATR8. Of the CAC's other predicted gene products, the reducing PKS ATR6 might synthesize a polyketide chain. This polyketide is probably transferred onto the atranone backbone by the polyketide transferase ATR5. Other predicted CAC products include 4 oxygenases (ATR2, ATR3, ATR4, and ATR14), 3 short-chain reductases (ATR7, ATR9, and ATR10), and a methyltransferase (ATR12). These may all be involved in the various steps of atranone biosynthesis, although their specific roles must await experimental determination. This Stachybotrys chlorohalonatus (strain IBT 40285) protein is Cytochrome P450 monooxygenase ATR14.